Consider the following 641-residue polypeptide: Tetracycline resistance protein TetQ (641 aa).

In terms of domain architecture, tr-type G spans 1-244 (MNIINLGILA…AITSFILPPA (244 aa)). GTP is bound by residues 10-17 (AHIDAGKT), 74-78 (DTPGH), and 128-131 (NKID).

Belongs to the TRAFAC class translation factor GTPase superfamily. Classic translation factor GTPase family. TetM/TetO subfamily.

Functionally, abolishes the inhibitory effect of tetracyclin on protein synthesis by a non-covalent modification of the ribosomes. The polypeptide is Tetracycline resistance protein TetQ (tetQ) (Bacteroides thetaiotaomicron).